Consider the following 374-residue polypeptide: o-succinylbenzoate synthase (374 aa).

Lys164 acts as the Proton donor in catalysis. 3 residues coordinate Mg(2+): Asp189, Glu214, and Asp239. Lys263 (proton acceptor) is an active-site residue.

Belongs to the mandelate racemase/muconate lactonizing enzyme family. MenC type 2 subfamily. As to quaternary structure, homodimer. A divalent metal cation is required as a cofactor.

The enzyme catalyses (1R,6R)-6-hydroxy-2-succinyl-cyclohexa-2,4-diene-1-carboxylate = 2-succinylbenzoate + H2O. It functions in the pathway quinol/quinone metabolism; 1,4-dihydroxy-2-naphthoate biosynthesis; 1,4-dihydroxy-2-naphthoate from chorismate: step 4/7. Its pathway is quinol/quinone metabolism; menaquinone biosynthesis. Its function is as follows. Converts 2-succinyl-6-hydroxy-2,4-cyclohexadiene-1-carboxylate (SHCHC) to 2-succinylbenzoate (OSB). Also acts as a N-succinylamino acid racemase (NSAR) that catalyzes the racemization of N-succinyl-L-phenylglycine. L.innocua has the menaquinone synthesis pathway, indicating that the species requires OSBS activity. However, the NSAR/OSBS is not encoded in the menaquinone operon, raising the possibility that both NSAR and OSBS are biological functions. This chain is o-succinylbenzoate synthase, found in Listeria innocua serovar 6a (strain ATCC BAA-680 / CLIP 11262).